Here is an 80-residue protein sequence, read N- to C-terminus: MDYADYDKALYYTHRSQWDNLLILMVRTEDDLLSKRIEHFLHAYHFEQDYAVLEKMLYSLLRYIDHATELTYEDQIALLT.

This is an uncharacterized protein from Bacillus subtilis (strain 168).